Reading from the N-terminus, the 442-residue chain is Probable protein phosphatase 2C 15 (442 aa).

One can recognise a PPM-type phosphatase domain in the interval 35-303; sequence AAERPELQVG…DDTTCIVVDI (269 aa). Mn(2+) is bound by residues D80, G81, D255, and D294. The segment covering 420 to 434 has biased composition (basic and acidic residues); that stretch reads KKEAMEGKRRSRDSS. The tract at residues 420-442 is disordered; the sequence is KKEAMEGKRRSRDSSSRNSGSSE.

Belongs to the PP2C family. The cofactor is Mg(2+). Mn(2+) is required as a cofactor.

The catalysed reaction is O-phospho-L-seryl-[protein] + H2O = L-seryl-[protein] + phosphate. It catalyses the reaction O-phospho-L-threonyl-[protein] + H2O = L-threonyl-[protein] + phosphate. This is Probable protein phosphatase 2C 15 from Oryza sativa subsp. japonica (Rice).